We begin with the raw amino-acid sequence, 99 residues long: Acylphosphatase (99 aa).

An Acylphosphatase-like domain is found at 5 to 97 (VRQVTVQGRV…RPGERFSTLP (93 aa)). Residues arginine 20 and asparagine 38 contribute to the active site.

This sequence belongs to the acylphosphatase family.

It catalyses the reaction an acyl phosphate + H2O = a carboxylate + phosphate + H(+). This chain is Acylphosphatase (acyP), found in Rhodopseudomonas palustris (strain BisB18).